The following is a 454-amino-acid chain: Cytochrome b-c1 complex subunit 2, mitochondrial (454 aa).

The transit peptide at 1 to 35 directs the protein to the mitochondrion; sequence MISRSALSRGSQLALRRPAAAKTAQRGFAAAAASP.

It belongs to the peptidase M16 family. UQCRC2/QCR2 subfamily. As to quaternary structure, component of the ubiquinol-cytochrome c oxidoreductase (cytochrome b-c1 complex, complex III, CIII), a multisubunit enzyme composed of 10 subunits. The complex is composed of 3 respiratory subunits cytochrome b (cob), cytochrome c1 (cyt-1) and Rieske protein (fes-1), 2 core protein subunits pep and ucr-1, and 5 low-molecular weight protein subunits qcr6, qcr7, qcr8, qcr9 and probably NCU16844/qcr10. The complex exists as an obligatory dimer and forms supercomplexes (SCs) in the inner mitochondrial membrane with NADH-ubiquinone oxidoreductase (complex I, CI) and cytochrome c oxidase (complex IV, CIV), resulting in different assemblies (supercomplexes SCI(1)III(2), SCIII(2)IV(1) and SCIII(2)IV(2) as well as higher order I(x)III(y)IV(z) megacomplexes).

The protein localises to the mitochondrion inner membrane. Its function is as follows. Component of the ubiquinol-cytochrome c oxidoreductase, a multisubunit transmembrane complex that is part of the mitochondrial electron transport chain which drives oxidative phosphorylation. The respiratory chain contains 3 multisubunit complexes succinate dehydrogenase (complex II, CII), ubiquinol-cytochrome c oxidoreductase (cytochrome b-c1 complex, complex III, CIII) and cytochrome c oxidase (complex IV, CIV), that cooperate to transfer electrons derived from NADH and succinate to molecular oxygen, creating an electrochemical gradient over the inner membrane that drives transmembrane transport and the ATP synthase. The cytochrome b-c1 complex catalyzes electron transfer from ubiquinol to cytochrome c, linking this redox reaction to translocation of protons across the mitochondrial inner membrane, with protons being carried across the membrane as hydrogens on the quinol. In the process called Q cycle, 2 protons are consumed from the matrix, 4 protons are released into the intermembrane space and 2 electrons are passed to cytochrome c. This is Cytochrome b-c1 complex subunit 2, mitochondrial (ucr-1) from Neurospora crassa (strain ATCC 24698 / 74-OR23-1A / CBS 708.71 / DSM 1257 / FGSC 987).